Reading from the N-terminus, the 919-residue chain is Bifunctional uridylyltransferase/uridylyl-removing enzyme (919 aa).

The uridylyltransferase stretch occupies residues 1 to 373 (MTDPKVPRQR…LAGFNAKSRM (373 aa)). Residues 374–727 (LKGYTVFGGK…CEFDEERGAT (354 aa)) are uridylyl-removing. One can recognise an HD domain in the interval 489-611 (VDEHTIRAIG…VQSLERLRHL (123 aa)). ACT domains are found at residues 728 to 811 (LVTV…LAKR) and 839 to 919 (VIEV…LEPA).

It belongs to the GlnD family. Requires Mg(2+) as cofactor.

It carries out the reaction [protein-PII]-L-tyrosine + UTP = [protein-PII]-uridylyl-L-tyrosine + diphosphate. The catalysed reaction is [protein-PII]-uridylyl-L-tyrosine + H2O = [protein-PII]-L-tyrosine + UMP + H(+). Its activity is regulated as follows. Uridylyltransferase (UTase) activity is inhibited by glutamine, while glutamine activates uridylyl-removing (UR) activity. Modifies, by uridylylation and deuridylylation, the PII regulatory proteins (GlnB and homologs), in response to the nitrogen status of the cell that GlnD senses through the glutamine level. Under low glutamine levels, catalyzes the conversion of the PII proteins and UTP to PII-UMP and PPi, while under higher glutamine levels, GlnD hydrolyzes PII-UMP to PII and UMP (deuridylylation). Thus, controls uridylylation state and activity of the PII proteins, and plays an important role in the regulation of nitrogen assimilation and metabolism. In Erythrobacter litoralis (strain HTCC2594), this protein is Bifunctional uridylyltransferase/uridylyl-removing enzyme.